Here is a 292-residue protein sequence, read N- to C-terminus: Leucine-rich repeat-containing protein 10B (292 aa).

Residues 1-20 (MGIAESTPDELPSDAEEQLR) form a disordered region. The segment covering 7–16 (TPDELPSDAE) has biased composition (acidic residues). LRR repeat units lie at residues 22-43 (GDQQ…VCAL), 45-66 (RLQK…IEEL), 68-90 (ELRI…CRLP), 91-112 (RLTR…FAQL), 114-136 (SLRC…LRLV), 137-158 (ALQS…LPRM), 160-181 (GLRG…LLRM), 183-204 (RLHI…HPLR), and 205-226 (ALRV…ADTV). Residues 236–261 (RMAERDEPTPRPPPRRPARAFEDEEE) form a disordered region.

This Homo sapiens (Human) protein is Leucine-rich repeat-containing protein 10B (LRRC10B).